Reading from the N-terminus, the 277-residue chain is Urease accessory protein UreD (277 aa).

It belongs to the UreD family. In terms of assembly, ureD, UreF and UreG form a complex that acts as a GTP-hydrolysis-dependent molecular chaperone, activating the urease apoprotein by helping to assemble the nickel containing metallocenter of UreC. The UreE protein probably delivers the nickel.

The protein localises to the cytoplasm. Functionally, required for maturation of urease via the functional incorporation of the urease nickel metallocenter. The polypeptide is Urease accessory protein UreD (Yersinia pestis (strain Pestoides F)).